The primary structure comprises 361 residues: Porphobilinogen deaminase (361 aa).

An N-acetylserine modification is found at Ser-2. Ser-69 is subject to Phosphoserine. Lys-74 is subject to N6-acetyllysine. Ser-147 carries the phosphoserine modification. S-(dipyrrolylmethanemethyl)cysteine is present on Cys-261.

It belongs to the HMBS family. Monomer. The cofactor is dipyrromethane.

The protein resides in the cytoplasm. Its subcellular location is the cytosol. The catalysed reaction is 4 porphobilinogen + H2O = hydroxymethylbilane + 4 NH4(+). Its pathway is porphyrin-containing compound metabolism; protoporphyrin-IX biosynthesis; coproporphyrinogen-III from 5-aminolevulinate: step 2/4. As part of the heme biosynthetic pathway, catalyzes the sequential polymerization of four molecules of porphobilinogen to form hydroxymethylbilane, also known as preuroporphyrinogen. Catalysis begins with the assembly of the dipyrromethane cofactor by the apoenzyme from two molecules of porphobilinogen or from preuroporphyrinogen. The covalently linked cofactor acts as a primer, around which the tetrapyrrole product is assembled. In the last step of catalysis, the product, preuroporphyrinogen, is released, leaving the cofactor bound to the holodeaminase intact. The protein is Porphobilinogen deaminase (Hmbs) of Rattus norvegicus (Rat).